A 179-amino-acid chain; its full sequence is Cell division protein SepF (179 aa).

The disordered stretch occupies residues 18-57 (EDSTVPYEKGNEPVFTPVNSSQEPDLPMNQPSQSAGAKDS). The segment covering 34–57 (PVNSSQEPDLPMNQPSQSAGAKDS) has biased composition (polar residues).

This sequence belongs to the SepF family. As to quaternary structure, homodimer. Interacts with FtsZ.

The protein localises to the cytoplasm. Functionally, cell division protein that is part of the divisome complex and is recruited early to the Z-ring. Probably stimulates Z-ring formation, perhaps through the cross-linking of FtsZ protofilaments. Its function overlaps with FtsA. The sequence is that of Cell division protein SepF from Streptococcus pneumoniae (strain Hungary19A-6).